We begin with the raw amino-acid sequence, 82 residues long: Small ribosomal subunit protein bS16 (82 aa).

This sequence belongs to the bacterial ribosomal protein bS16 family.

The protein is Small ribosomal subunit protein bS16 of Photorhabdus laumondii subsp. laumondii (strain DSM 15139 / CIP 105565 / TT01) (Photorhabdus luminescens subsp. laumondii).